The following is a 191-amino-acid chain: Guanylate kinase (191 aa).

The Guanylate kinase-like domain occupies 10-188; that stretch reads GQLIVLTGPS…ALHRLVKLIG (179 aa). 17 to 24 lines the ATP pocket; that stretch reads GPSGVGKG.

The protein belongs to the guanylate kinase family.

It is found in the cytoplasm. It carries out the reaction GMP + ATP = GDP + ADP. Essential for recycling GMP and indirectly, cGMP. This chain is Guanylate kinase (gmk), found in Synechocystis sp. (strain ATCC 27184 / PCC 6803 / Kazusa).